An 88-amino-acid polypeptide reads, in one-letter code: MGFTDETVRFRLDDSNKVEISETLTAVYRSLEEKGYNPINQIVGYVLSGDPAYVPRYNDARNQIRKYERDEIVEELVRYYLQGNGIDL.

This sequence belongs to the UPF0297 family.

The polypeptide is UPF0297 protein SAK_2030 (Streptococcus agalactiae serotype Ia (strain ATCC 27591 / A909 / CDC SS700)).